The primary structure comprises 501 residues: Cystine/glutamate transporter (501 aa).

At 1-43 (MVRKPVVSTISKGGYLQGNVNGRLPSLGNKEPPGQEKVQLKRK) the chain is on the cytoplasmic side. Position 26 is a phosphoserine (S26). The chain crosses the membrane as a helical span at residues 44-64 (VTLLRGVSIIIGTIIGAGIFI). The Extracellular segment spans residues 65 to 74 (SPKGVLQNTG). A helical transmembrane segment spans residues 75-95 (SVGMSLTIWTVCGVLSLFGAL). Over 96–101 (SYAELG) the chain is Cytoplasmic. An intramembrane segment occupies 102 to 116 (TTIKKSGGHYTYILE). Residues 117–130 (VFGPLPAFVRVWVE) are Cytoplasmic-facing. The chain crosses the membrane as a helical span at residues 131-150 (LLIIRPAATAVISLAFGRYI). Residue R135 participates in L-glutamate binding. At 151–163 (LEPFFIQCEIPEL) the chain is on the extracellular side. Residues 164-179 (AIKLITAVGITVVMVL) traverse the membrane as a helical segment. The Cytoplasmic portion of the chain corresponds to 180-193 (NSMSVSWSARIQIF). Residues 194–210 (LTFCKLTAILIIIVPGV) traverse the membrane as a helical segment. At 211–234 (MQLIKGQTQNFKDAFSGRDSSITR) the chain is on the extracellular side. The chain crosses the membrane as a helical span at residues 235-255 (LPLAFYYGMYAYAGWFYLNFV). Y244 provides a ligand contact to L-glutamate. Residues 256–265 (TEEVENPEKT) lie on the Cytoplasmic side of the membrane. The helical transmembrane segment at 266 to 286 (IPLAICISMAIVTIGYVLTNV) threads the bilayer. The Extracellular portion of the chain corresponds to 287 to 317 (AYFTTINAEELLLSNAVAVTFSERLLGNFSL). N-linked (GlcNAc...) asparagine glycosylation occurs at N314. Residues 318–338 (AVPIFVALSCFGSMNGGVFAV) form a helical membrane-spanning segment. Residues 339-364 (SRLFYVASREGHLPEILSMIHVRKHT) lie on the Cytoplasmic side of the membrane. A helical membrane pass occupies residues 365–385 (PLPAVIVLHPLTMIMLFSGDL). Topologically, residues 386-387 (DS) are extracellular. A helical transmembrane segment spans residues 388-408 (LLNFLSFARWLFIGLAVAGLI). Residues 409 to 422 (YLRYKCPDMHRPFK) lie on the Cytoplasmic side of the membrane. The helical transmembrane segment at 423–443 (VPLFIPALFSFTCLFMVALSL) threads the bilayer. The Extracellular segment spans residues 444 to 449 (YSDPFS). The helical transmembrane segment at 450 to 470 (TGIGSVITLTGVPAYYLFIIW) threads the bilayer. Residues 471 to 501 (DKKPRWFRIMSEKITRTLQIILEVVPEEDKL) are Cytoplasmic-facing.

It belongs to the amino acid-polyamine-organocation (APC) superfamily. L-type amino acid transporter (LAT) (TC 2.A.3.8) family. As to quaternary structure, disulfide-linked heterodimer with the amino acid transport protein SLC3A2/4F2hc; this interaction mediates cell membrane localization.

It localises to the cell membrane. It is found in the cell projection. The protein localises to the microvillus membrane. The catalysed reaction is L-cystine(out) + L-glutamate(in) = L-cystine(in) + L-glutamate(out). It carries out the reaction an L-alpha-amino acid(in) + L-kynurenine(out) = an L-alpha-amino acid(out) + L-kynurenine(in). It catalyses the reaction N-acetyl-L-cysteine(out) + L-glutamate(in) = N-acetyl-L-cysteine(in) + L-glutamate(out). In terms of biological role, heterodimer with SLC3A2, that functions as an antiporter by mediating the exchange of extracellular anionic L-cystine and intracellular L-glutamate across the cellular plasma membrane. Provides L-cystine for the maintenance of the redox balance between extracellular L-cystine and L-cysteine and for the maintenance of the intracellular levels of glutathione that is essential for cells protection from oxidative stress. The transport is sodium-independent, electroneutral with a stoichiometry of 1:1, and is drove by the high intracellular concentration of L-glutamate and the intracellular reduction of L-cystine. In addition, mediates the import of L-kynurenine leading to anti-ferroptotic signaling propagation required to maintain L-cystine and glutathione homeostasis. Moreover, mediates N-acetyl-L-cysteine uptake into the placenta leading to subsequently down-regulation of pathways associated with oxidative stress, inflammation and apoptosis. In vitro can also transport L-aspartate. May participate in astrocyte and meningeal cell proliferation during development and can provide neuroprotection by promoting glutathione synthesis and delivery from non-neuronal cells such as astrocytes and meningeal cells to immature neurons. Controls the production of pheomelanin pigment directly. This chain is Cystine/glutamate transporter, found in Pongo abelii (Sumatran orangutan).